The primary structure comprises 339 residues: MTLQVQSAISLKPFNTFGVDVQARLFAEAHSDDDVREALAYSVEHDVSLLVIGGGSNLLLSGDVQSLVLRMASRGIRIVHEDCLESIVEAEAGEPWHPFVQSCLELGLAGLENLSLIPGTVGAAPMQNIGAYGVEIKDVFHSLTALDRETGELREFSLEDCAFGYRDSVFKHQVARWLILRVRFKLSRVANLHLEYGPVRQRLDELGIDKPTPFDVSRAICAIRSEKLPDPAVLGNAGSFFKNPIIPAQLYATIKQQHPGVVGYPQDDGRVKLAAGWLIEQAGWKGYRDGDAGVHKLQSLVLVNYGQASGLQLLNLARRIQSDIVERFGVELEMEPNLY.

One can recognise an FAD-binding PCMH-type domain in the interval 19 to 189 (VDVQARLFAE…LRVRFKLSRV (171 aa)). Residue R166 is part of the active site. Residue S239 is the Proton donor of the active site. Residue E335 is part of the active site.

Belongs to the MurB family. The cofactor is FAD.

The protein localises to the cytoplasm. It catalyses the reaction UDP-N-acetyl-alpha-D-muramate + NADP(+) = UDP-N-acetyl-3-O-(1-carboxyvinyl)-alpha-D-glucosamine + NADPH + H(+). It participates in cell wall biogenesis; peptidoglycan biosynthesis. Its function is as follows. Cell wall formation. The sequence is that of UDP-N-acetylenolpyruvoylglucosamine reductase from Pseudomonas savastanoi pv. phaseolicola (strain 1448A / Race 6) (Pseudomonas syringae pv. phaseolicola (strain 1448A / Race 6)).